Consider the following 239-residue polypeptide: 7-cyano-7-deazaguanine synthase (239 aa).

13 to 23 (FSGGQDSTTCL) serves as a coordination point for ATP. The Zn(2+) site is built by cysteine 192, cysteine 201, cysteine 204, and cysteine 207.

It belongs to the QueC family. The cofactor is Zn(2+).

It carries out the reaction 7-carboxy-7-deazaguanine + NH4(+) + ATP = 7-cyano-7-deazaguanine + ADP + phosphate + H2O + H(+). It functions in the pathway purine metabolism; 7-cyano-7-deazaguanine biosynthesis. Its function is as follows. Catalyzes the ATP-dependent conversion of 7-carboxy-7-deazaguanine (CDG) to 7-cyano-7-deazaguanine (preQ(0)). In Shewanella sp. (strain MR-7), this protein is 7-cyano-7-deazaguanine synthase.